The following is a 248-amino-acid chain: Probable transcriptional regulatory protein Noc_0137 (248 aa).

It belongs to the TACO1 family.

Its subcellular location is the cytoplasm. In Nitrosococcus oceani (strain ATCC 19707 / BCRC 17464 / JCM 30415 / NCIMB 11848 / C-107), this protein is Probable transcriptional regulatory protein Noc_0137.